Reading from the N-terminus, the 419-residue chain is Thymidine phosphorylase (419 aa).

This sequence belongs to the thymidine/pyrimidine-nucleoside phosphorylase family. Homodimer.

It carries out the reaction thymidine + phosphate = 2-deoxy-alpha-D-ribose 1-phosphate + thymine. The enzymes which catalyze the reversible phosphorolysis of pyrimidine nucleosides are involved in the degradation of these compounds and in their utilization as carbon and energy sources, or in the rescue of pyrimidine bases for nucleotide synthesis. The sequence is that of Thymidine phosphorylase (deoA) from Mycoplasmoides pirum (Mycoplasma pirum).